Consider the following 89-residue polypeptide: uncharacterized protein (89 aa).

It to B.licheniformis xpaF1 and to B.subtilis XhlA.

This is an uncharacterized protein from Bacillus licheniformis.